A 240-amino-acid chain; its full sequence is Aquaporin Z (240 aa).

The next 2 helical transmembrane spans lie at 10–30 and 35–55; these read MIGTFWLTFAGCGSAVIAAGF and IGLVGVSLAFGLSVVTMAYAI. Residues 64 to 66 carry the NPA 1 motif; sequence NPA. 3 helical membrane passes run 90–110, 131–151, and 160–180; these read VLGAIAAAALLYLIASGAAGF, LVACFVMEVVMTMMFLFVIMG, and GFAPLAIGLALVMIHLVSIPV. The NPA 2 motif lies at 186-188; that stretch reads NPA. The chain crosses the membrane as a helical span at residues 202 to 222; it reads IGQLWLFWVAPLLGGVLGGVI.

This sequence belongs to the MIP/aquaporin (TC 1.A.8) family. Homotetramer.

It localises to the cell inner membrane. It carries out the reaction H2O(in) = H2O(out). In terms of biological role, channel that permits osmotically driven movement of water in both directions. It is involved in the osmoregulation and in the maintenance of cell turgor during volume expansion in rapidly growing cells. It mediates rapid entry or exit of water in response to abrupt changes in osmolarity. This chain is Aquaporin Z, found in Rhodopseudomonas palustris (strain ATCC BAA-98 / CGA009).